A 132-amino-acid polypeptide reads, in one-letter code: Precursor of CEP10 (132 aa).

An N-terminal signal peptide occupies residues 1-19; the sequence is MKLFIIIVVTSLTISKVFD. Residues 20 to 66 constitute a propeptide that is removed on maturation; it reads KTLVTIEARNLRKMDRHEHFNANEDFVEAKMLKKIDNKNNLNNRCIN. Residues proline 70 and proline 73 each carry the hydroxyproline modification. Positions 82–91 are excised as a propeptide; the sequence is PKVINNKFTK. Residues proline 95, proline 98, and proline 102 each carry the hydroxyproline modification. The propeptide occupies 107–116; it reads LRVVNNKFTN. Proline 120, proline 123, and proline 127 each carry hydroxyproline. Proline 132 is a propeptide.

This sequence belongs to the C-terminally encoded plant signaling peptide (CEP) family. As to quaternary structure, interacts with CEP receptors (e.g. CEPR1 and CEPR2). In terms of processing, the mature small signaling peptide is generated by proteolytic processing of the longer precursor.

It is found in the secreted. The protein resides in the extracellular space. It localises to the apoplast. Its function is as follows. Extracellular signaling peptide that may regulate primary root growth rate and systemic nitrogen (N)-demand signaling. In Arabidopsis thaliana (Mouse-ear cress), this protein is Precursor of CEP10.